Reading from the N-terminus, the 296-residue chain is Nucleotide-binding protein M28_Spy0517 (296 aa).

Position 13–20 (13–20 (GMSGAGKT)) interacts with ATP. 63-66 (DMRS) contributes to the GTP binding site.

Belongs to the RapZ-like family.

In terms of biological role, displays ATPase and GTPase activities. The chain is Nucleotide-binding protein M28_Spy0517 from Streptococcus pyogenes serotype M28 (strain MGAS6180).